A 703-amino-acid polypeptide reads, in one-letter code: Polyribonucleotide nucleotidyltransferase (703 aa).

The Mg(2+) site is built by aspartate 486 and aspartate 492. A KH domain is found at 553–612 (PKIEIIHINPDKIRDVIGPGGKKINEIIDATGVKLDIEQDGTVFIGSSDASMIEAAKKLI). An S1 motif domain is found at 622–690 (GQIYMATVKR…KQGRVNASRK (69 aa)).

It belongs to the polyribonucleotide nucleotidyltransferase family. Requires Mg(2+) as cofactor.

It localises to the cytoplasm. It catalyses the reaction RNA(n+1) + phosphate = RNA(n) + a ribonucleoside 5'-diphosphate. Functionally, involved in mRNA degradation. Catalyzes the phosphorolysis of single-stranded polyribonucleotides processively in the 3'- to 5'-direction. In Macrococcus caseolyticus (strain JCSC5402) (Macrococcoides caseolyticum), this protein is Polyribonucleotide nucleotidyltransferase.